A 225-amino-acid polypeptide reads, in one-letter code: PKHD-type hydroxylase YbiX (225 aa).

Residues 78–177 form the Fe2OG dioxygenase domain; that stretch reads TLSTPLFNRY…RVASFMWIQS (100 aa). 3 residues coordinate Fe cation: His96, Asp98, and His158. Arg168 contributes to the 2-oxoglutarate binding site.

It depends on Fe(2+) as a cofactor. L-ascorbate is required as a cofactor.

This chain is PKHD-type hydroxylase YbiX, found in Escherichia coli (strain 55989 / EAEC).